The following is a 695-amino-acid chain: U1 snRNP-associated protein usp107 (695 aa).

Residues 85-96 (RDNESQQKDRKN) are compositionally biased toward basic and acidic residues. Residues 85 to 134 (RDNESQQKDRKNLPRNQKSNEIQEKQTFQTPSSEKSTTERESRPFVPPNS) form a disordered region. The span at 98–113 (PRNQKSNEIQEKQTFQ) shows a compositional bias: polar residues. The 83-residue stretch at 139–221 (RMLFIGNIPK…PSTRLSLITD (83 aa)) folds into the RRM domain. The stretch at 265–369 (DVRSRIERAA…NLLSKHRISR (105 aa)) forms a coiled coil. Composition is skewed to basic and acidic residues over residues 487-506 (EEDA…RTRG) and 548-561 (SERR…RLLL). Disordered stretches follow at residues 487 to 509 (EEDA…GEGA) and 540 to 590 (QTKK…AEKT). Residues 605-695 (ESLWALPIDW…HVLLILRSEA (91 aa)) enclose the PWI domain.

Component of the U1 snRNP particle, a subcomplex of the spliceosome. Interacts with prp5 and usp102.

It is found in the cytoplasm. It localises to the nucleus. Component of the U1 snRNP particle, which recognizes and binds the 5'-splice site of pre-mRNA. Together with other non-snRNP factors, U1 snRNP forms the spliceosomal commitment complex, that targets pre-mRNA to the splicing pathway. This chain is U1 snRNP-associated protein usp107 (usp107), found in Schizosaccharomyces pombe (strain 972 / ATCC 24843) (Fission yeast).